The primary structure comprises 290 residues: Endoplasmic reticulum-Golgi intermediate compartment protein 1 (290 aa).

The Cytoplasmic segment spans residues 1 to 26 (MPFDFRRFDIYRKVPKDLTQPTYTGA). The chain crosses the membrane as a helical span at residues 27–47 (IISICCCLFILFLFLSELTGF). Over 48-254 (ITTEVVNELY…RRQPLYRFIT (207 aa)) the chain is Lumenal. Residue asparagine 74 is glycosylated (N-linked (GlcNAc...) asparagine). The helical transmembrane segment at 255–275 (TICAIIGGTFTVAGILDSCIF) threads the bilayer. The Cytoplasmic segment spans residues 276–290 (TASEAWKKIQLGKMH).

The protein belongs to the ERGIC family. May form a heteromeric complex composed of ERGIC1, ERGIC2 and ERGIC3. Within the complex, the interaction with ERGIC3 is direct. Interacts with ERGIC3/ERV46. In terms of processing, N-glycosylated.

Its subcellular location is the endoplasmic reticulum membrane. The protein resides in the endoplasmic reticulum-Golgi intermediate compartment membrane. It localises to the golgi apparatus membrane. Functionally, possible role in transport between endoplasmic reticulum and Golgi. The sequence is that of Endoplasmic reticulum-Golgi intermediate compartment protein 1 (ERGIC1) from Homo sapiens (Human).